The primary structure comprises 66 residues: DNA-binding protein 7d (66 aa).

N6-methyllysine; partial is present on residues K5 and K7.

This sequence belongs to the 7 kDa DNA-binding/endoribonuclease P2 family. In terms of assembly, monomer. In terms of processing, lys-5 was 70% monomethylated in form 7a, 25% in form 7b, and 20% in form 7d. Lys-7 was 50% monomethylated in form 7a, 40% in form 7b, and 50% in form 7d.

The protein resides in the cytoplasm. In terms of biological role, can constrain negative DNA supercoils. May be involved in maintaining the integrity of the genome at high temperature. The polypeptide is DNA-binding protein 7d (Sulfolobus acidocaldarius (strain ATCC 33909 / DSM 639 / JCM 8929 / NBRC 15157 / NCIMB 11770)).